The sequence spans 130 residues: MTLKKSFSASLLSPFLIICLIALLSVPVSVGARRLLEEPKPEIPTFPELPKPEMPKLPEFPKLELPKLPEIPKPEMPKLPEIQKPELPTFPELPKMPEFPKFDFPKLPELPKPEETKVPAFTMPKFPGSP.

The signal sequence occupies residues 1–32 (MTLKKSFSASLLSPFLIICLIALLSVPVSVGA). 13 repeat units span residues 47–51 (PELPK), 52–56 (PEMPK), 58–62 (PEFPK), 63–67 (LELPK), 69–73 (PEIPK), 74–78 (PEMPK), 80–84 (PEIQK), 91–95 (PELPK), 97–101 (PEFPK), 102–106 (FDFPK), 108–112 (PELPK), 113–117 (PEETK), and 121–125 (FTMPK). Residues 47 to 125 (PELPKPEMPK…TKVPAFTMPK (79 aa)) are 13 X 5 AA tandem repeat of P-[DEGQ]-[AEFLIV]-[QPT]-K. The span at 71–84 (IPKPEMPKLPEIQK) shows a compositional bias: basic and acidic residues. The interval 71-130 (IPKPEMPKLPEIQKPELPTFPELPKMPEFPKFDFPKLPELPKPEETKVPAFTMPKFPGSP) is disordered. Residues 98-117 (EFPKFDFPKLPELPKPEETK) are compositionally biased toward basic and acidic residues.

It is found in the secreted. The protein resides in the cell wall. This chain is Protein PELPK2, found in Arabidopsis thaliana (Mouse-ear cress).